The following is a 122-amino-acid chain: Large ribosomal subunit protein uL14 (122 aa).

The protein belongs to the universal ribosomal protein uL14 family. In terms of assembly, part of the 50S ribosomal subunit. Forms a cluster with proteins L3 and L19. In the 70S ribosome, L14 and L19 interact and together make contacts with the 16S rRNA in bridges B5 and B8.

Its function is as follows. Binds to 23S rRNA. Forms part of two intersubunit bridges in the 70S ribosome. In Frankia alni (strain DSM 45986 / CECT 9034 / ACN14a), this protein is Large ribosomal subunit protein uL14.